The primary structure comprises 557 residues: Aerobic glycerol-3-phosphate dehydrogenase (557 aa).

An FAD-binding site is contributed by Asp-21–Glu-49.

It belongs to the FAD-dependent glycerol-3-phosphate dehydrogenase family. FAD serves as cofactor.

The protein localises to the cytoplasm. The enzyme catalyses a quinone + sn-glycerol 3-phosphate = dihydroxyacetone phosphate + a quinol. It functions in the pathway polyol metabolism; glycerol degradation via glycerol kinase pathway; glycerone phosphate from sn-glycerol 3-phosphate (aerobic route): step 1/1. The protein is Aerobic glycerol-3-phosphate dehydrogenase (glpD) of Staphylococcus aureus (strain USA300).